Here is a 365-residue protein sequence, read N- to C-terminus: Red-sensitive opsin (365 aa).

Topologically, residues 1–51 (MASQLNEAIFAARRRNDDDDTTRSSVFTYTNSNNTRGPFEGPNYHIAPRWV) are extracellular. An N-linked (GlcNAc...) asparagine glycan is attached at asparagine 33. The chain crosses the membrane as a helical span at residues 52 to 76 (YNLTSIWMIFVVFASVFTNGLVIVA). The Cytoplasmic portion of the chain corresponds to 77 to 88 (TLKFKKLRHPLN). Residues 89-113 (WILVNMAIADLGETVIASTISVFNQ) form a helical membrane-spanning segment. Over 114–128 (IFGYFILGHPMCVLE) the chain is Extracellular. Cysteines 125 and 202 form a disulfide. The chain crosses the membrane as a helical span at residues 129–148 (GFTVSTCGITALWSLTVIAW). The Cytoplasmic segment spans residues 149–167 (ERWFVVCKPFGNIKFDEKL). The helical transmembrane segment at 168–191 (AATGIIFSWVWSAGWCAPPMFGWS) threads the bilayer. At 192–217 (RFWPHGLKTSCGPDVFSGSSDPGVQS) the chain is on the extracellular side. The helical transmembrane segment at 218–245 (YMLVLMITCCIIPLAIIILCYLHVWWTI) threads the bilayer. The Cytoplasmic segment spans residues 246-267 (RQVAQQQKESESTQKAEREVSR). A helical membrane pass occupies residues 268–291 (MVVVMIVAYIFCWGPYTFFACFAA). At 292-299 (FSPGYSFH) the chain is on the extracellular side. A helical membrane pass occupies residues 300-324 (PLAAALPAYFAKSATIYNPIIYVFM). Position 311 is an N6-(retinylidene)lysine (lysine 311). The Cytoplasmic segment spans residues 325–365 (NRQFRNCIYQMFGKKVDDGSEVSSTSRTEVSSVSNSSVSPA). Residues 342–365 (DGSEVSSTSRTEVSSVSNSSVSPA) are disordered. The span at 345-365 (EVSSTSRTEVSSVSNSSVSPA) shows a compositional bias: low complexity.

This sequence belongs to the G-protein coupled receptor 1 family. Opsin subfamily. In terms of processing, phosphorylated on some or all of the serine and threonine residues present in the C-terminal region.

The protein localises to the membrane. In terms of biological role, visual pigments are the light-absorbing molecules that mediate vision. They consist of an apoprotein, opsin, covalently linked to cis-retinal. In Xenopus laevis (African clawed frog), this protein is Red-sensitive opsin (opn1lw1).